Reading from the N-terminus, the 99-residue chain is Transmembrane protein 14A (99 aa).

The next 3 helical transmembrane spans lie at M1 to K21, G24 to Y44, and P79 to L99.

The protein belongs to the TMEM14 family.

Its subcellular location is the mitochondrion membrane. The protein resides in the endoplasmic reticulum membrane. In terms of biological role, inhibits apoptosis via negative regulation of the mitochondrial outer membrane permeabilization involved in apoptotic signaling pathway. The chain is Transmembrane protein 14A (TMEM14A) from Bos taurus (Bovine).